A 610-amino-acid chain; its full sequence is UvrABC system protein C (610 aa).

Residues 13–91 (HLPGVYRMYD…IKENQPKYNV (79 aa)) form the GIY-YIG domain. Residues 201–236 (GQVVEHLVQKMENAAQELDFEAAARFRDQIQSVRAV) form the UVR domain.

It belongs to the UvrC family. As to quaternary structure, interacts with UvrB in an incision complex.

Its subcellular location is the cytoplasm. The UvrABC repair system catalyzes the recognition and processing of DNA lesions. UvrC both incises the 5' and 3' sides of the lesion. The N-terminal half is responsible for the 3' incision and the C-terminal half is responsible for the 5' incision. This chain is UvrABC system protein C, found in Actinobacillus pleuropneumoniae serotype 7 (strain AP76).